We begin with the raw amino-acid sequence, 1222 residues long: BOS complex subunit NOMO3 (1222 aa).

The N-terminal stretch at 1-31 (MLVGQGAGPLGPAVVTAAVVLLLSGVGPAHG) is a signal peptide. Over 32-1155 (SEDIVVGCGG…NPTRKLPEQD (1124 aa)) the chain is Extracellular. Residues N50, N218, and N618 are each glycosylated (N-linked (GlcNAc...) asparagine). A helical transmembrane segment spans residues 1156-1176 (IAQGSYIALPLTLLVLLAGYN). Topologically, residues 1177-1222 (HDKLIPLLLQLTSRLQGVGALGQAASDNSGPEDAKRQAKKQKTRRT) are cytoplasmic. The tract at residues 1198–1222 (GQAASDNSGPEDAKRQAKKQKTRRT) is disordered. Positions 1213-1222 (QAKKQKTRRT) are enriched in basic residues.

In terms of assembly, component of the back of Sec61 (BOS) complex, composed of NCLN/Nicalin, NOMO (NOMO1, NOMO2 or NOMO3) and TMEM147. The BOS complex is part of the multi-pass translocon (MPT) complex, composed of three subcomplexes, the GEL complex (composed of RAB5IF/OPTI and TMCO1), the BOS complex (composed of NCLN/Nicalin, NOMO and TMEM147) and the PAT complex (composed of WDR83OS/Asterix and CCDC47). The MPT complex associates with the SEC61 complex. Due to the strong similarity between NOMO1, NOMO2 and NOMO3, similar interaction pattern probably occur for the three gene copies.

The protein localises to the endoplasmic reticulum membrane. Functionally, component of the multi-pass translocon (MPT) complex that mediates insertion of multi-pass membrane proteins into the lipid bilayer of membranes. The MPT complex takes over after the SEC61 complex: following membrane insertion of the first few transmembrane segments of proteins by the SEC61 complex, the MPT complex occludes the lateral gate of the SEC61 complex to promote insertion of subsequent transmembrane regions. This chain is BOS complex subunit NOMO3 (NOMO3), found in Homo sapiens (Human).